Reading from the N-terminus, the 171-residue chain is Co-chaperone protein HscB homolog (171 aa).

The J domain maps to 2-74; that stretch reads NHFELFRLPF…ISRAEYMLSE (73 aa).

Belongs to the HscB family. As to quaternary structure, interacts with HscA and stimulates its ATPase activity.

Its function is as follows. Co-chaperone involved in the maturation of iron-sulfur cluster-containing proteins. Seems to help targeting proteins to be folded toward HscA. The sequence is that of Co-chaperone protein HscB homolog from Photobacterium profundum (strain SS9).